The following is a 217-amino-acid chain: Methylthioribulose-1-phosphate dehydratase (217 aa).

The Zn(2+) site is built by H106 and H108.

This sequence belongs to the aldolase class II family. MtnB subfamily. Requires Zn(2+) as cofactor.

It catalyses the reaction 5-(methylsulfanyl)-D-ribulose 1-phosphate = 5-methylsulfanyl-2,3-dioxopentyl phosphate + H2O. The protein operates within amino-acid biosynthesis; L-methionine biosynthesis via salvage pathway; L-methionine from S-methyl-5-thio-alpha-D-ribose 1-phosphate: step 2/6. Catalyzes the dehydration of methylthioribulose-1-phosphate (MTRu-1-P) into 2,3-diketo-5-methylthiopentyl-1-phosphate (DK-MTP-1-P). The chain is Methylthioribulose-1-phosphate dehydratase from Xanthomonas campestris pv. campestris (strain B100).